The chain runs to 198 residues: Recombination protein RecR (198 aa).

The C4-type zinc-finger motif lies at 57–72 (CSICGNLTDDDPCHIC). Positions 80 to 175 (TTILVVEDAK…KVTRLARGLA (96 aa)) constitute a Toprim domain.

This sequence belongs to the RecR family.

Its function is as follows. May play a role in DNA repair. It seems to be involved in an RecBC-independent recombinational process of DNA repair. It may act with RecF and RecO. The sequence is that of Recombination protein RecR from Streptococcus pyogenes serotype M5 (strain Manfredo).